The sequence spans 500 residues: Zinc finger protein ENHYDROUS (500 aa).

Residues 1–42 form a disordered region; that stretch reads MPVDLDNSSTVSGDASVSSTGNQNLTPKSVGKKKRNLPGMPD. The segment covering 8-21 has biased composition (low complexity); the sequence is SSTVSGDASVSSTG. Phosphoserine is present on Ser-51. C2H2-type zinc fingers lie at residues 61-83 and 102-132; these read FVCE…RRGH and YVCP…CRKH. Positions 124 to 131 match the Nuclear localization signal motif; it reads IKKHFCRK. The segment at 137-160 adopts a C2H2-type 2; degenerate zinc-finger fold; the sequence is WKCEKCSKKYAVQSDWKAHSKICG. The Zn(2+) site is built by Cys-139, Cys-142, His-155, Cys-159, Cys-166, Cys-168, His-181, and Cys-185. Residues 164–187 form a CCHC-type 2; atypical zinc finger; the sequence is YKCDCGTLFSRRDSFITHRAFCDA. The SHR-binding stretch occupies residues 174-186; it reads RRDSFITHRAFCD. The interval 196-236 is disordered; sequence HTQSKKLYPETVTRKNPEIEQKSPAAVESSPSLPPSSPPSV. Residues 207 to 216 show a composition bias toward basic and acidic residues; sequence VTRKNPEIEQ.

In terms of assembly, interacts with the DELLA proteins (e.g. GAI/RGA2, RGA, RGL1, RGL2 and RGLG3), acting as coactivators. As to expression, at 3 days post anthesis (DPA), expressed in the chalazal endosperm region. By 6 DPA, expressed in the endosperm and embryo. In fully germinated seed, strongest expression in the root tip and not detected in the cotyledons. In 4-days old seedlings, restricted to the vasculature of the cotyledons, the shoot apical meristem region, and the root tip. By 8 days, restricted to newly emerged leaves.

It is found in the nucleus. Functionally, transcription factor promoting the transition to germination by regulating light and hormonal signaling during seed maturation. Acts as a positive regulator of phytochrome and/or gibberellin action. The sequence is that of Zinc finger protein ENHYDROUS from Arabidopsis thaliana (Mouse-ear cress).